The following is a 512-amino-acid chain: Maturase K (512 aa).

The protein belongs to the intron maturase 2 family. MatK subfamily.

It localises to the plastid. The protein resides in the chloroplast. Functionally, usually encoded in the trnK tRNA gene intron. Probably assists in splicing its own and other chloroplast group II introns. The protein is Maturase K of Alisma canaliculatum (Water plantain).